Consider the following 80-residue polypeptide: Putative membrane protein insertion efficiency factor (80 aa).

The tract at residues 61-80 (KTGKDPVPDRFSLKRNQEGE) is disordered. Residues 62–80 (TGKDPVPDRFSLKRNQEGE) show a composition bias toward basic and acidic residues.

The protein belongs to the UPF0161 family.

Its subcellular location is the cell membrane. Its function is as follows. Could be involved in insertion of integral membrane proteins into the membrane. This Streptococcus pneumoniae (strain P1031) protein is Putative membrane protein insertion efficiency factor.